We begin with the raw amino-acid sequence, 384 residues long: DNA dC-&gt;dU-editing enzyme APOBEC-3G (384 aa).

Residues 1–60 (MKPHFRNPVERMYQDTFSDNFYNRPILSHRNTVWLCYEVKTKGPSRPPLDAKIFRGQVYS) are essential for cytoplasmic localization. CMP/dCMP-type deaminase domains lie at 29 to 138 (HRNT…LRSL) and 214 to 328 (GRHE…LRTL). Residue T32 is modified to Phosphothreonine; by PKA. The Zn(2+) site is built by H65, C97, and C100. Residues 209–336 (ELWVRGRHET…TLAKAGAKIS (128 aa)) are necessary for homooligomerization. Residues 213–215 (RGR) form an interaction with DNA region. Phosphothreonine; by PKA and CAMK2 is present on T218. Zn(2+) is bound at residue H257. The active-site Proton donor is the E259. Residues C288 and C291 each contribute to the Zn(2+) site. The segment at 313 to 320 (RIYDDQGR) is interaction with DNA.

It belongs to the cytidine and deoxycytidylate deaminase family. In terms of assembly, homodimer. Homooligomer. Can bind RNA to form ribonucleoprotein complexes of high-molecular-mass (HMM) or low-molecular-mass (LMM). HMM is inactive and heterogeneous in protein composition because of binding nonselectively to cellular RNAs, which in turn are associated with variety of cellular proteins. The LMM form which is enzymatically active has few or no RNAs associated. Its ability to form homooligomer is distinct from its ability to assemble into HMM. Interacts with APOBEC3B, APOBEC3F, MOV10, AGO2, EIF4E, EIF4ENIF1, DCP2 and DDX6 in an RNA-dependent manner. Interacts with AGO1, AGO3 and PKA/PRKACA. The cofactor is Zn(2+).

Its subcellular location is the cytoplasm. It localises to the nucleus. It is found in the P-body. It catalyses the reaction a 2'-deoxycytidine in single-stranded DNA + H2O + H(+) = a 2'-deoxyuridine in single-stranded DNA + NH4(+). Its function is as follows. DNA deaminase (cytidine deaminase) which acts as an inhibitor of retrovirus replication and retrotransposon mobility via deaminase-dependent and -independent mechanisms. Exhibits antiviral activity against vif-deficient: HIV-1 and simian immunodeficiency viruses (SIVs) and also against simian foamy virus (SFV). After the penetration of retroviral nucleocapsids into target cells of infection and the initiation of reverse transcription, it can induce the conversion of cytosine to uracil in the minus-sense single-strand viral DNA, leading to G-to-A hypermutations in the subsequent plus-strand viral DNA. The resultant detrimental levels of mutations in the proviral genome, along with a deamination-independent mechanism that works prior to the proviral integration, together exert efficient antiretroviral effects in infected target cells. Selectively targets single-stranded DNA and does not deaminate double-stranded DNA or single- or double-stranded RNA. May inhibit the mobility of LTR retrotransposons. This Pan troglodytes (Chimpanzee) protein is DNA dC-&gt;dU-editing enzyme APOBEC-3G (APOBEC3G).